Consider the following 146-residue polypeptide: uncharacterized protein (146 aa).

The region spanning 7–146 (LDINYKTDEL…DGHDVLVWTP (140 aa)) is the N-acetyltransferase domain.

This is an uncharacterized protein from Staphylococcus saprophyticus subsp. saprophyticus (strain ATCC 15305 / DSM 20229 / NCIMB 8711 / NCTC 7292 / S-41).